Here is a 290-residue protein sequence, read N- to C-terminus: RxLR effector protein Avr4 (290 aa).

Positions 1–24 (MRSLHILLVITASLLASLAVSAEA) are cleaved as a signal peptide. The tract at residues 33 to 56 (VVENNKDKSRFLRDGGTTEAQTDE) is disordered. A compositionally biased stretch (basic and acidic residues) spans 36–45 (NNKDKSRFLR). The RxLR-dEER motif lies at 42–58 (RFLRDGGTTEAQTDEER). A W1 motif region spans residues 118 to 141 (KYERMQWQKLNEGQTLTYMRVGDR). The tract at residues 151–174 (QLLRWVAQKKTVKSVYDDLQIEGF) is W2 motif. Residues 224 to 247 (VFEKWAMEGTHIKSVIKTLNLNNK) are W3 motif. Asparagine 246 is a glycosylation site (N-linked (GlcNAc...) asparagine). Positions 249 to 270 (ASEMANNENFPALLKYVKLYLD) are y motif.

Belongs to the RxLR effector family.

Its subcellular location is the secreted. The protein localises to the host cytoplasm. It is found in the host nucleus. The protein resides in the host nucleolus. It localises to the host cytoskeleton. Functionally, secreted effector that acts as an elicitor of hypersensitive response (HR) specifically on plants carrying defense protein R4, through its interaction with this protein. The protein is RxLR effector protein Avr4 of Phytophthora mirabilis.